Consider the following 109-residue polypeptide: Tektin-3 (109 aa).

This sequence belongs to the tektin family. As to quaternary structure, microtubule inner protein component of sperm flagellar doublet microtubules. Interacts with TEKT1, TEKT2, TEKT4 and TEKT5. Interacts with CCDC38. Post-translationally, N- and O-glycosylated. In terms of processing, may be proteolytically processed during the epididymal transit of spermatozoa. Ubiquitinated, leading to its degradation. Deubiquitinated by USP16, promoting its stability.

The protein resides in the cytoplasm. The protein localises to the cytoskeleton. Its subcellular location is the cilium axoneme. It localises to the flagellum axoneme. It is found in the cytoplasmic vesicle. The protein resides in the secretory vesicle. The protein localises to the acrosome outer membrane. Its function is as follows. Microtubule inner protein (MIP) part of the dynein-decorated doublet microtubules (DMTs) in cilia and flagellar axoneme. Forms filamentous polymers in the walls of ciliary and flagellar microtubules. Required for normal sperm mobility. The sequence is that of Tektin-3 from Mesocricetus auratus (Golden hamster).